A 59-amino-acid chain; its full sequence is Large ribosomal subunit protein bL32 (59 aa).

Belongs to the bacterial ribosomal protein bL32 family.

This chain is Large ribosomal subunit protein bL32, found in Mycoplasma capricolum subsp. capricolum (strain California kid / ATCC 27343 / NCTC 10154).